A 434-amino-acid polypeptide reads, in one-letter code: MKPSKHLIFALFALAISQPTMAAPQPIDRVAVQINDGIVLESEITNMIDTVKANARAANQSLPSDSALRTQVIERLILTRLQLQMADRIGLHIGDLQLDQAIENIAREQKMTVAQMQQKIESEGLSFGQYREQLREEITLGEIQRIQVQRRIQVSPQEITGLVKLIQEQGMKDVEYQIGHILIDVPNNPNSEQLEASSKRANAVLERLKSGEDFRRTAIASSSGPKALEGGIWDYMNINEMPTLFAEVINGAKKGDIIGPIKSGAGFHIIKIMDARGLQTKEIEEVRARHILLKPSPILSEDRAKAMLEQFLKQIRSGEAKFEDLARQYSEDPGSATKGGELGWAEPSIYVPEFAQTLNSLSPDQISEPFRTTHGWHITQLEERRKTDATDQFNTNRAHQLIFRRKFNEELQNWLDEMRADAYIEVFQPESNRG.

An N-terminal signal peptide occupies residues 1–22; that stretch reads MKPSKHLIFALFALAISQPTMA. PpiC domains follow at residues 173–274 and 283–383; these read DVEY…KIMD and IEEV…QLEE.

The protein localises to the periplasm. The enzyme catalyses [protein]-peptidylproline (omega=180) = [protein]-peptidylproline (omega=0). Functionally, chaperone involved in the correct folding and assembly of outer membrane proteins. Recognizes specific patterns of aromatic residues and the orientation of their side chains, which are found more frequently in integral outer membrane proteins. May act in both early periplasmic and late outer membrane-associated steps of protein maturation. The sequence is that of Chaperone SurA from Shewanella sp. (strain MR-7).